Consider the following 568-residue polypeptide: MFLDYSGYEALTEINSSFGKYVLLLQQFEGCRSLKDRLQMLKDLGREFMIFENLNVEDFRESKNMIHRFYTMVISLRQIMEIGPLVRRSPAVLVVEFDCPVEDCLDELDPLHPLNRAFIFIHKQWTYYHQYYIVEKVKKVILDMAPVKEDDWSILHKVVYSEGFVERRYKKKKYLGDIYIPQPLMKSNKITTISNFSQLTKISNVRVYRFNATAACDPQNLNKKNLSIKELKDKDLPNLIWTLEPEKFYVDMRPYKEHEERKKRREEEAKVRMQGEEQENIMIERKKMDSIEVEASSGLKNIIKTPLANRVVNTFNNCAAVVIGYVTEVDKVKDDNEEKNNDRPKIANDGIAQKSRSESEDNAGTPMENAYFQPEPQDNDQNNISWNTTMKDIDPIYMSERCARVWRKEQQMLGLEKAQTFEKKYCKDQMVMDENQVEEPGKHSERHTKNQVVRPRTKIASSASKNDNSNNKNSKSCKNCHKEEAHGLVREYLKIKLNISPHGERNQRTKDKRKCIMKYNASSNNINKMPGESEVLGSTILTDIHFKDVVTVKFRDFKAKFRKVKINA.

A compositionally biased stretch (basic and acidic residues) spans D334 to I346. Disordered stretches follow at residues D334–N382 and Q436–N479. A compositionally biased stretch (low complexity) spans K458–C477.

It to yeast YJL043w.

This is an uncharacterized protein from Saccharomyces cerevisiae (strain ATCC 204508 / S288c) (Baker's yeast).